Consider the following 244-residue polypeptide: DNA repair protein RecO (244 aa).

This sequence belongs to the RecO family.

Functionally, involved in DNA repair and RecF pathway recombination. The protein is DNA repair protein RecO of Myxococcus xanthus (strain DK1622).